The primary structure comprises 226 residues: ATP synthase subunit a (226 aa).

5 consecutive transmembrane segments (helical) span residues 20-40 (LNWL…WLLP), 74-94 (FISL…PYIF), 100-120 (LTLT…YGWI), 158-180 (LAVR…GNTG), and 197-217 (IALL…FAVL).

It belongs to the ATPase A chain family. As to quaternary structure, F-type ATPases have 2 components, CF(1) - the catalytic core - and CF(0) - the membrane proton channel. CF(1) has five subunits: alpha(3), beta(3), gamma(1), delta(1), epsilon(1). CF(0) has three main subunits: a, b and c.

It localises to the mitochondrion inner membrane. In terms of biological role, mitochondrial membrane ATP synthase (F(1)F(0) ATP synthase or Complex V) produces ATP from ADP in the presence of a proton gradient across the membrane which is generated by electron transport complexes of the respiratory chain. F-type ATPases consist of two structural domains, F(1) - containing the extramembraneous catalytic core and F(0) - containing the membrane proton channel, linked together by a central stalk and a peripheral stalk. During catalysis, ATP synthesis in the catalytic domain of F(1) is coupled via a rotary mechanism of the central stalk subunits to proton translocation. Key component of the proton channel; it may play a direct role in the translocation of protons across the membrane. The protein is ATP synthase subunit a (ATP6) of Anopheles quadrimaculatus (Common malaria mosquito).